Here is a 361-residue protein sequence, read N- to C-terminus: 3-dehydroquinate synthase (361 aa).

Residues 104–108 (GVIGD), 128–129 (TT), lysine 140, and lysine 149 contribute to the NAD(+) site. 3 residues coordinate Zn(2+): glutamate 182, histidine 245, and histidine 262.

Belongs to the sugar phosphate cyclases superfamily. Dehydroquinate synthase family. NAD(+) serves as cofactor. Requires Co(2+) as cofactor. The cofactor is Zn(2+).

Its subcellular location is the cytoplasm. The enzyme catalyses 7-phospho-2-dehydro-3-deoxy-D-arabino-heptonate = 3-dehydroquinate + phosphate. It participates in metabolic intermediate biosynthesis; chorismate biosynthesis; chorismate from D-erythrose 4-phosphate and phosphoenolpyruvate: step 2/7. Functionally, catalyzes the conversion of 3-deoxy-D-arabino-heptulosonate 7-phosphate (DAHP) to dehydroquinate (DHQ). The sequence is that of 3-dehydroquinate synthase from Halalkalibacterium halodurans (strain ATCC BAA-125 / DSM 18197 / FERM 7344 / JCM 9153 / C-125) (Bacillus halodurans).